Reading from the N-terminus, the 794-residue chain is Histone-lysine N-methyltransferase, H3 lysine-9 specific SUVH5 (794 aa).

Disordered stretches follow at residues 187 to 210 (VGRD…KRSI) and 254 to 276 (SPVK…KNSE). Over residues 194-203 (NMGSKFSKNG) the composition is skewed to polar residues. Residues 258–276 (PSEKRNGDYGEGSMRKNSE) show a composition bias toward basic and acidic residues. The region spanning 365–515 (GTVPGVEVGD…KLVFKFKLRR (151 aa)) is the YDG domain. The region spanning 585–644 (KSCGCTNGCSKSKNCACIVKNGGKIPYYDGAIVEIKPLVYECGPHCKCPPSCNMRVSQHG) is the Pre-SET domain. Residues 647–764 (IKLEIFKTES…PLQELSYDYN (118 aa)) form the SET domain. Positions 778–794 (KKKFCYCGSAECSGRLY) constitute a Post-SET domain.

The protein belongs to the class V-like SAM-binding methyltransferase superfamily. Histone-lysine methyltransferase family. Suvar3-9 subfamily. In terms of tissue distribution, expressed in leaves stems and flowers.

It is found in the nucleus. The protein localises to the chromosome. It localises to the centromere. The catalysed reaction is N(6)-methyl-L-lysyl(9)-[histone H3] + S-adenosyl-L-methionine = N(6),N(6)-dimethyl-L-lysyl(9)-[histone H3] + S-adenosyl-L-homocysteine + H(+). The enzyme catalyses L-lysyl(9)-[histone H3] + S-adenosyl-L-methionine = N(6)-methyl-L-lysyl(9)-[histone H3] + S-adenosyl-L-homocysteine + H(+). Histone methyltransferase. Methylates 'Lys-9' of histone H3. H3 'Lys-9' methylation represents a specific tag for epigenetic transcriptional repression. In Arabidopsis thaliana (Mouse-ear cress), this protein is Histone-lysine N-methyltransferase, H3 lysine-9 specific SUVH5 (SUVH5).